Reading from the N-terminus, the 240-residue chain is DNA repair protein RecO (240 aa).

The protein belongs to the RecO family.

Functionally, involved in DNA repair and RecF pathway recombination. In Xanthomonas oryzae pv. oryzae (strain MAFF 311018), this protein is DNA repair protein RecO.